The chain runs to 488 residues: Prostaglandin E2 receptor EP4 subtype (488 aa).

Over 1–19 (MSTPVANASASSMPELLNN) the chain is Extracellular. N7 is a glycosylation site (N-linked (GlcNAc...) asparagine). A helical membrane pass occupies residues 20-43 (PVTIPAVMFIFGVVGNLVAIVVLC). The Cytoplasmic segment spans residues 44–55 (KSRKEQKETTFY). Residues 56–79 (TLVCGLAVTDLLGTLLVSPVTIAT) form a helical membrane-spanning segment. Over 80-96 (YMKGQWPGGQALCDYST) the chain is Extracellular. The cysteines at positions 92 and 170 are disulfide-linked. A helical membrane pass occupies residues 97–115 (FILLFFGLSGLSIICAMSI). Over 116–135 (ERYLAINHAYFYSHYVDKRL) the chain is Cytoplasmic. The helical transmembrane segment at 136–160 (AGLTLFAVYASNVLFCALPNMGLGR) threads the bilayer. Topologically, residues 161–184 (SRLQFPDTWCFIDWRTNVTAHAAF) are extracellular. Residue N177 is glycosylated (N-linked (GlcNAc...) asparagine). Residues 185–211 (SYMYAGFSSFLILATVLCNVLVCGALL) form a helical membrane-spanning segment. The Cytoplasmic segment spans residues 212–270 (RMHRQFMRRTSLGTEQHHAAAAAAVTSAACRGHPTASPALPRLSDFRRRRSFRRIAGAE). A helical transmembrane segment spans residues 271–298 (IQMVILLIATSLVVLICSIPLVVRVFIN). The Extracellular segment spans residues 299 to 315 (QLYQPDLVREISQNPDL). A helical transmembrane segment spans residues 316-335 (QAIRIASVNPILDPWIYILL). Topologically, residues 336-488 (RKTVLSKAIE…ETLNLSEKCI (153 aa)) are cytoplasmic. Residues 358 to 371 (RRDRSGQHCSDSRR) show a composition bias toward basic and acidic residues. Positions 358 to 381 (RRDRSGQHCSDSRRTSSAMSTHSR) are disordered. Residues 372 to 381 (TSSAMSTHSR) are compositionally biased toward polar residues. S377, S380, S382, and S385 each carry phosphoserine. The tract at residues 456–475 (EVGGGGRAGPTPKGSSLQVT) is disordered.

This sequence belongs to the G-protein coupled receptor 1 family. As to quaternary structure, interacts with FEM1A. Post-translationally, phosphorylation mediates agonist-mediated desensitization by promoting cytoplasmic retention. In terms of tissue distribution, highly expressed in intestine, duodenal epithelium, uterus, thymus and adrenal cortex. Lower but significant expression in whole adrenal, lung, spleen, stomach, and kidney. In this latter organ, the receptor is localized in the glomeruli and the transitional epithelium of the renal calyx.

It localises to the cell membrane. Its function is as follows. Receptor for prostaglandin E2 (PGE2). The activity of this receptor is mediated by G(s) proteins that stimulate adenylate cyclase. Has a relaxing effect on smooth muscle. May play an important role in regulating renal hemodynamics, intestinal epithelial transport, adrenal aldosterone secretion, and uterine function. In Oryctolagus cuniculus (Rabbit), this protein is Prostaglandin E2 receptor EP4 subtype (PTGER4).